The following is a 246-amino-acid chain: 5'-nucleotidase SurE (246 aa).

The a divalent metal cation site is built by aspartate 8, aspartate 9, serine 39, and asparagine 91.

Belongs to the SurE nucleotidase family. A divalent metal cation serves as cofactor.

Its subcellular location is the cytoplasm. It carries out the reaction a ribonucleoside 5'-phosphate + H2O = a ribonucleoside + phosphate. Nucleotidase that shows phosphatase activity on nucleoside 5'-monophosphates. The protein is 5'-nucleotidase SurE of Dechloromonas aromatica (strain RCB).